The following is a 374-amino-acid chain: P2Y purinoceptor 2 (374 aa).

Topologically, residues 1-32 (MAAGLDSWNSTINGTWEGDELGYKCRFNEDFK) are extracellular. Residues Asn-9 and Asn-13 are each glycosylated (N-linked (GlcNAc...) asparagine). The helical transmembrane segment at 33 to 59 (YVLLPVSYGVVCVLGLCLNVVALYIFL) threads the bilayer. Topologically, residues 60–70 (CRLKTWNASTT) are cytoplasmic. A helical membrane pass occupies residues 71 to 93 (YMFHLAVSDSLYAASLPLLVYYY). Residues 94-110 (AQGDHWPFSTVLCKLVR) are Extracellular-facing. An intrachain disulfide couples Cys-106 to Cys-183. The chain crosses the membrane as a helical span at residues 111 to 129 (FLFYTNLYCSILFLTCISV). Residues 130–152 (HRCLGVLRPLHSLSWGHARYARR) are Cytoplasmic-facing. The helical transmembrane segment at 153–172 (VAAVVWVLVLACQAPVLYFV) threads the bilayer. Residues 173 to 194 (TTSVRGTRITCHDTSARELFSH) are Extracellular-facing. Residues 195-220 (FVAYSSVMLGLLFAVPFSIILVCYVL) traverse the membrane as a helical segment. Topologically, residues 221-245 (MARRLLKPAYGTTGLPRAKRKSVRT) are cytoplasmic. The helical transmembrane segment at 246 to 268 (IALVLAVFALCFLPFHVTRTLYY) threads the bilayer. Over 269–286 (SFRSLDLSCHTLNAINMA) the chain is Extracellular. Residues 287 to 308 (YKITRPLASANSCLDPVLYFLA) traverse the membrane as a helical segment. The Cytoplasmic portion of the chain corresponds to 309-374 (GQRLVRFARD…AGSETKDIRL (66 aa)). The interval 318–374 (DAKPATEPTPSPQARRKLGLHRPNRTDTVRKDLSISSDDSRRTESTPAGSETKDIRL) is disordered. The span at 331 to 340 (ARRKLGLHRP) shows a compositional bias: basic residues. Residues 341–361 (NRTDTVRKDLSISSDDSRRTE) are compositionally biased toward basic and acidic residues.

The protein belongs to the G-protein coupled receptor 1 family.

The protein localises to the cell membrane. In terms of biological role, receptor for ATP and UTP coupled to G-proteins that activate a phosphatidylinositol-calcium second messenger system. The affinity range is UTP = ATP &gt; ATP-gamma-S &gt;&gt; 2-methylthio-ATP = ADP. The protein is P2Y purinoceptor 2 (P2ry2) of Rattus norvegicus (Rat).